Consider the following 262-residue polypeptide: Ubiquitin thioesterase otubain-like (262 aa).

The OTU domain occupies 64–262; sequence KFIRRTRPDG…PGHYDILYPN (199 aa). Residue Asp-72 is part of the active site. Cys-75 (nucleophile) is an active-site residue. Ile-168 serves as a coordination point for substrate. The active site involves His-255.

The protein belongs to the peptidase C65 family.

The enzyme catalyses Thiol-dependent hydrolysis of ester, thioester, amide, peptide and isopeptide bonds formed by the C-terminal Gly of ubiquitin (a 76-residue protein attached to proteins as an intracellular targeting signal).. Functionally, possible hydrolase that can remove conjugated ubiquitin from proteins in vitro and may therefore play an important regulatory role at the level of protein turnover by preventing degradation. The polypeptide is Ubiquitin thioesterase otubain-like (Drosophila melanogaster (Fruit fly)).